The primary structure comprises 83 residues: MRKGTVKEVLAKIKYDPRENENDYYLIIEHRGDYGNVKKIPVNLIELGHGYFFVGETQIPYHRILKVVRKDGRVIWESRKIRK.

The protein belongs to the UPF0248 family.

The protein is UPF0248 protein PH1212.1 of Pyrococcus horikoshii (strain ATCC 700860 / DSM 12428 / JCM 9974 / NBRC 100139 / OT-3).